The chain runs to 402 residues: Putative neuropeptide Y receptor 11 (402 aa).

At 1–45 the chain is on the extracellular side; it reads MGSVNESCDNYVEIFNKINYFFRDDQVINGTEYSPKEFGYFITFA. Asn-5 and Asn-29 each carry an N-linked (GlcNAc...) asparagine glycan. Residues 46 to 66 traverse the membrane as a helical segment; the sequence is YMLIILFGAIGNFLTIIVVIL. Residues 67–85 lie on the Cytoplasmic side of the membrane; that stretch reads NPAMRTTRNFFILNLALSD. Residues 86 to 106 form a helical membrane-spanning segment; that stretch reads FFVCIVTAPTTLYTVLYMFWP. The Extracellular segment spans residues 107 to 122; the sequence is FSRTLCKIAGSLQGFN. An intrachain disulfide couples Cys-112 to Cys-194. The chain crosses the membrane as a helical span at residues 123-143; that stretch reads IFLSTFSIASIAVDRYVLIIF. Residues 144-152 lie on the Cytoplasmic side of the membrane; the sequence is PTKRERQQN. Residues 153–173 form a helical membrane-spanning segment; sequence LSFCFFIMIWVISLILAVPLL. The Extracellular portion of the chain corresponds to 174 to 210; it reads QASDLTPVFVEPSCDLALYICHEQNEIWEKMIISKGT. A helical transmembrane segment spans residues 211–231; it reads YTLAVLITQYAFPLFSLVFAY. Residues 232 to 272 lie on the Cytoplasmic side of the membrane; sequence SRIAHRMKLRFANRNQNVTTNTNTSQRRRSVVERQRRTHLL. The chain crosses the membrane as a helical span at residues 273–293; that stretch reads LVCVVAVFAVAWLPLNVFHIF. The Extracellular segment spans residues 294 to 306; that stretch reads NTFELVNSFSVTT. The chain crosses the membrane as a helical span at residues 307–328; that stretch reads FSICHCLAMCSACLNPLIYAFF. At 329–402 the chain is on the cytoplasmic side; the sequence is NHNFRIEFMH…LSAMEQDEQL (74 aa).

The protein belongs to the G-protein coupled receptor 1 family.

The protein resides in the cell membrane. Its function is as follows. Could be a receptor for neuropeptide Y and peptide YY. This chain is Putative neuropeptide Y receptor 11 (npr-11), found in Caenorhabditis elegans.